Reading from the N-terminus, the 410-residue chain is Enterobactin exporter EntS (410 aa).

Residues Met-1–Ala-21 are Cytoplasmic-facing. A helical membrane pass occupies residues Val-22–Val-42. Residues Gln-43 to Gly-55 lie on the Periplasmic side of the membrane. Residues Leu-56 to Ala-76 form a helical membrane-spanning segment. Over Asp-77–Lys-83 the chain is Cytoplasmic. Residues Val-84–Leu-104 traverse the membrane as a helical segment. Residues Leu-105–Ser-109 lie on the Periplasmic side of the membrane. The helical transmembrane segment at Leu-110–Ala-130 threads the bilayer. At Leu-131–Arg-156 the chain is on the cytoplasmic side. Residues Leu-157–Trp-177 form a helical membrane-spanning segment. Position 178 (Asn-178) is a topological domain, periplasmic. The helical transmembrane segment at Tyr-179–Leu-199 threads the bilayer. Residues Pro-200–Arg-218 lie on the Cytoplasmic side of the membrane. Residues Phe-219–Ala-233 form a helical membrane-spanning segment. At Ser-234–Ser-250 the chain is on the periplasmic side. A helical membrane pass occupies residues Ala-251–Thr-271. Over Ser-272–Pro-281 the chain is Cytoplasmic. Residues Gly-282 to Leu-301 traverse the membrane as a helical segment. Residues Met-302–Leu-307 lie on the Periplasmic side of the membrane. Residues Gly-308–Leu-330 traverse the membrane as a helical segment. Residues Gln-331–Asn-350 are Cytoplasmic-facing. A helical transmembrane segment spans residues Val-351–Val-371. Ala-372 is a topological domain (periplasmic). Residues Ser-373 to Val-393 traverse the membrane as a helical segment. At Glu-394–Ser-410 the chain is on the cytoplasmic side.

This sequence belongs to the major facilitator superfamily. EntS (TC 2.A.1.38) family.

Its subcellular location is the cell inner membrane. In terms of biological role, component of an export pathway for enterobactin. This Shigella flexneri protein is Enterobactin exporter EntS.